Reading from the N-terminus, the 159-residue chain is SsrA-binding protein (159 aa).

It belongs to the SmpB family.

The protein localises to the cytoplasm. In terms of biological role, required for rescue of stalled ribosomes mediated by trans-translation. Binds to transfer-messenger RNA (tmRNA), required for stable association of tmRNA with ribosomes. tmRNA and SmpB together mimic tRNA shape, replacing the anticodon stem-loop with SmpB. tmRNA is encoded by the ssrA gene; the 2 termini fold to resemble tRNA(Ala) and it encodes a 'tag peptide', a short internal open reading frame. During trans-translation Ala-aminoacylated tmRNA acts like a tRNA, entering the A-site of stalled ribosomes, displacing the stalled mRNA. The ribosome then switches to translate the ORF on the tmRNA; the nascent peptide is terminated with the 'tag peptide' encoded by the tmRNA and targeted for degradation. The ribosome is freed to recommence translation, which seems to be the essential function of trans-translation. In Bifidobacterium adolescentis (strain ATCC 15703 / DSM 20083 / NCTC 11814 / E194a), this protein is SsrA-binding protein.